Reading from the N-terminus, the 348-residue chain is Sec-independent protein translocase protein TatC (348 aa).

Transmembrane regions (helical) follow at residues 7-27 (LCLTVSTILCAGFASNLMDIL), 162-182 (VVISFPLLLYFLLQFIIPGLL), 192-212 (CMAVGFGLFLAGTLFCYFIVL), 244-264 (MILMFGLAFELPVVVMPFVKL), 278-298 (YAIVAIAVLAAVITPTPDVAT), and 299-319 (MMLMAVPMYALYEICIILAWM).

Belongs to the TatC family. In terms of assembly, forms a complex with TatA.

The protein localises to the cell membrane. Its function is as follows. Part of the twin-arginine translocation (Tat) system that transports large folded proteins containing a characteristic twin-arginine motif in their signal peptide across membranes. In Akkermansia muciniphila (strain ATCC BAA-835 / DSM 22959 / JCM 33894 / BCRC 81048 / CCUG 64013 / CIP 107961 / Muc), this protein is Sec-independent protein translocase protein TatC.